Reading from the N-terminus, the 413-residue chain is Glycosyl hydrolase family 109 protein 2 (413 aa).

Residues 26-27 (NR), Asp-48, 96-99 (WLTH), 116-117 (EV), and Asn-145 contribute to the NAD(+) site. Tyr-174 provides a ligand contact to substrate. NAD(+)-binding positions include 191–195 (YHNHW) and Tyr-208. Residues 208 to 211 (YPTH) and Tyr-290 contribute to the substrate site.

This sequence belongs to the Gfo/Idh/MocA family. Glycosyl hydrolase 109 subfamily. It depends on NAD(+) as a cofactor.

Its function is as follows. Glycosidase. This chain is Glycosyl hydrolase family 109 protein 2, found in Phocaeicola vulgatus (strain ATCC 8482 / DSM 1447 / JCM 5826 / CCUG 4940 / NBRC 14291 / NCTC 11154) (Bacteroides vulgatus).